A 3415-amino-acid polypeptide reads, in one-letter code: MMTTSKGKGGGPPRRKLKVTANKSRPATSPMPKGFVLSRMLGILWHAVTGTARPPVLKMFWKTVPLRQAEAVLKKIKRVIGNLMQSLHMRGRRRSGVDWTWIFLTMALMTMAMATTIHRDREGYMVMRASGRDAASQVRVQNGTCVILATDMGEWCEDSITYSCVTIDQEEEPVDVDCFCRGVDRVKLEYGRCGRQAGSRGKRSVVIPTHAQKDMVGRGHAWLKGDNIRDHVTRVEGWMWKNKLLTAAIVALAWLMVDSWMARVTVILLALSLGPVYATRCTHLENRDFVTGTQGTTRVSLVLELGGCVTITAEGKPSIDVWLEDIFQESPAETREYCLHAKLTNTKVEARCPTTGPATLPEEHQANMVCKRDQSDRGWGNHCGFFGKGSIVACAKFECEEAKKAVGHVYDSTKITYVVKVEPHTGDYLAANETNSNRKSAQFTVASEKVILRLGDYGDVSLTCKVASGIDVAQTVVMSLDSSKDHLPSAWQVHRDWFEDLALPWKHKDNQDWNSVEKLVEFGPPHAVKMDVFNLGDQTAVLLKSLAGVPLASVEGQKYHLKSGHVTCDVGLEKLKLKGTTYSMCDKAKFKWKRVPVDSGHDTVVMEVSYTGSDKPCRIPVRAVAHGVPAVNVAMLITPNPTIETNGGGFIEMQLPPGDNIIYVGDLSQQWFQKGSTIGRMFEKTRRGLERLSVVGEHAWDFGSVGGVLSSVGKAIHTVLGGAFNTLFGGVGFIPKMLLGVALVWLGLNARNPTMSMTFLAVGALTLMMTMGVGADYGCAIDPERMEIRCGEGLVVWKEVSEWYDGYAYHPESPDTLAQALREAFERGVCGVVPQNRLEMAMWRSTAPELNLVLSEGEANLTIVVDKTDPADYRGGTPMVLKKTGKESKVSWKSWGKSILWSVPDSPRRMMMGVDGVGECPLYRRATGVFTVAEFGVGLRTKVFLDLRGEASKECDTGVMGAAVKNGKAIHTDQSMWMSSFRNDTGTYIHELILTDLRNCTWPASHTIDNDGVLDSHLFLPVTLAGPRSKYNRIPGYSEQVRGPWDQTPLRVVRDHCPGTSVRIDSHCDKRGASVRSTTESGKIIPEWCCRACELPPVTFRSGTDCWYAMEIRPVHSQGGLVRSMVVADNGALLSEGGVPGLVAVFVLMEFLLRRRPGSVTSILWGGILMLGLLVTGLVRVEEIVRYVIAVGVTFHLELGPETMVLVMLQAVFNMRTCYLMGFLVKRVITTREVVTVYFLLLVLEMGIPEMNFGHLWEWADALAMGLLIIKASAMEDRRGLGFLLAGLMTQRHLVAVHHGLMVFLTVALAVVGRNIYNGQKERKGLCFTVPLASLLGGSGSGLRMLALWECLGGRGRRSLSEPLTVVGVMLAMASGLLRHSSQEALLALSAGSFLILMLILGTRRLQLTAEWAGVVEWNPELVNEGGEVSLKVRQDAMGNLHLTEVEREERRLALWLVFGLLASAYHWSGILVTMGAWTVYELFSSTRRTDLVFSGQLPDQGEKRSFDIKEGVYRIYAPGLFWGYRQIGVGYGTKGVLHTMWHVTRGAALSVEGATSGPYWADVREDVVCYGGAWGLDKKWGGEVVQVHAFPPDSGHKIHQCQPGKLNLEGGRVLGAIPIDLPRGTSGSPIINAQGDVLGLYGNGLKSNDVYISSIAQGNVEKSRPEMPLAVQGGKWTSKGSITVLDMHPGSGKTHRVLPELIRECIDKRLRTVVLAPTRVVLKEMERALQGKRVKFHSAAVDNASSSSGAIVDVMCHATYVNRRLLPQGRQNWEVAIMDEAHWTDPHSIAARGHLYSLAKENRCALVLMTATPPGKSEAFPESKGAIVSEEKPIPEGEWRDGFDWITEFEGRTAWFVPSIAKGGAIARTLRQKGKSVICLNSKTFDKDYGRVHEEKPDFVVTTDISEMGANLDVNRVIDGRTNIKPEEIDGKVELIGTRRVTTASAAQRRGRVGRHEGRTDLYVYSGQCDDDDSSLVQWKEAQILLDNITTVRGPVATFYGPEQGKMLEVAGHFRLTEEKRKHFRHLLTNCDFTPWLAWHVAANTACVTDRKWTWEGPDENAIDGPGGELVTFRSPNGAERKLKPIWKDSRMFREGRDVADFIQYASGRRSAVDILTGLGGVPDLLRLRCTAAWDVVYTLLNETPGSRAMKMAERDAPEAMLTLLEVAVLGIATLGVVWCFIVRTSVSRMVLGTLVLAVALILLWLGGMDYGTMAGVALIFYLLLTVLQPEPGKQRSGEDNRLAFLLIGLGSVVGLVAANELGYLEQTKTDISGLFRREDQGGMVWDAWTNIDIQPARSWGTYVLIVSLFTPYMLHQLQTKIQRLVNSSVAAGTQAMRDLGGGTPFFGVAGHVVALGVTSLVGATPTSLALGVALAALHLAVVTSGLEAELTQRAHRAFFSAMVKNPMVDGEIINPIPDGDPKPALYERKMSLFLAIGLCIAAVALNRTAAAMTEAGAVAVAALGQLLRPEEESWWTMPMACGMAGLVRGSLWGLLPVLHRIWLRTQGARRGGAEGSTLGDIWKQRLNSCTKEEFFAYRRTGVMETNRDQARELLRRGETNMGLAVSRGCAKLAWLEERGYATLKGEVVDLGCGRGGWSYYAASRPSVMAVRAYTIGGKGHEAPRLVTSLGWNLIKFRSGMDVFSMATTRADTILCDIGESSPDPEKEGARSRRVILLMEQWKARNPDAAAVFKVLAPYRPEVLEALHRFQLQWGGGLVRVPFSRNSTHEMYYSTAVTGNLVNSVNVLSRKLLARFGETRGPIQVPEIDLGTGTRCVTLAEDKVKPRDVAERIGALREQYSESWHEDKEHPYRTWQYWGSYRTPATGSAASLINGVVKLLSWPWNAREDVTRMAMTDTTAFGQQRVFKEKVDTKAQEPQPGTRVIMRAVSDWLLEHLSRRAKVRMCTKDEFIAKVRSNAALGAWSDEQNKWSSAKEAVEDPEFWKLVDEERSRHLKGQCRHCVYNMMGKREKKLGEFGVAKGSRAIWYMWLGSRFLEFEVLGFLNEEHWASREVSGAGVEGTSLNYLGWLLRELGMKDGGKLYADDTAGWDTRITNADLEDEEQILRYMEGEHHVLAKTILEKAYHAKVVKVARPSPQGGCVMDVITRRDQRGSGQVVTYALNTITNMKVQLIRMMEGEGVIGPADSQDPRLKRVETWLKEHGVERLGRMLVSGDDCVVKPIDDRFGKALYFLNDMAKVRKDVGEWEPSMGFTEWEEVPFCSHHFHELVMKDGRSLIVPCRDQDELVGRARVSPGCGWSVRETACLSKAYGQMWLLNYFHRRDLRTLGFAICSAVPVSWVPMGRTTWSIHASGEWMTTEDMLRIWNKVWILDNPHMEDKQTVDEWRDIPYLPKTQDLVCSSLVGRKERAEWAKNIWGSVEKVRKLIGPEDYRDYLSSMDRHDLHWELKLESSII.

Positions 1–29 are disordered; the sequence is MMTTSKGKGGGPPRRKLKVTANKSRPATS. The Cytoplasmic segment spans residues 1-96; that stretch reads MMTTSKGKGG…LHMRGRRRSG (96 aa). The propeptide at 95-115 is ER anchor for the capsid protein C, removed in mature form by serine protease NS3; sequence SGVDWTWIFLTMALMTMAMAT. Residues 97-117 form a helical membrane-spanning segment; that stretch reads VDWTWIFLTMALMTMAMATTI. Residues 118–243 lie on the Extracellular side of the membrane; sequence HRDREGYMVM…RVEGWMWKNK (126 aa). N-linked (GlcNAc...) asparagine; by host glycosylation is present at asparagine 142. Residues 244 to 260 form a helical membrane-spanning segment; sequence LLTAAIVALAWLMVDSW. Position 261 (methionine 261) is a topological domain, cytoplasmic. A helical transmembrane segment spans residues 262-278; it reads ARVTVILLALSLGPVYA. The Extracellular segment spans residues 279-726; sequence TRCTHLENRD…HTVLGGAFNT (448 aa). 6 disulfides stabilise this stretch: cysteine 281-cysteine 308, cysteine 338-cysteine 394, cysteine 338-cysteine 399, cysteine 352-cysteine 383, cysteine 370-cysteine 394, and cysteine 370-cysteine 399. The fusion peptide stretch occupies residues 376 to 389; it reads DRGWGNHCGFFGKG. N-linked (GlcNAc...) asparagine; by host glycosylation is present at asparagine 432. 2 cysteine pairs are disulfide-bonded: cysteine 464-cysteine 568 and cysteine 585-cysteine 617. A helical transmembrane segment spans residues 727–747; that stretch reads LFGGVGFIPKMLLGVALVWLG. Over 748 to 754 the chain is Cytoplasmic; that stretch reads LNARNPT. The helical transmembrane segment at 755-775 threads the bilayer; the sequence is MSMTFLAVGALTLMMTMGVGA. The Extracellular segment spans residues 776-1187; sequence DYGCAIDPER…LVRVEEIVRY (412 aa). Disulfide bonds link cysteine 779–cysteine 790, cysteine 830–cysteine 920, cysteine 955–cysteine 1000, cysteine 1057–cysteine 1106, cysteine 1068–cysteine 1090, and cysteine 1089–cysteine 1093. Residues asparagine 860, asparagine 983, and asparagine 999 are each glycosylated (N-linked (GlcNAc...) asparagine; by host). A helical transmembrane segment spans residues 1188–1208; it reads VIAVGVTFHLELGPETMVLVM. Over 1209-1233 the chain is Cytoplasmic; it reads LQAVFNMRTCYLMGFLVKRVITTRE. A helical transmembrane segment spans residues 1234–1253; sequence VVTVYFLLLVLEMGIPEMNF. A topological domain (lumenal) is located at residue glycine 1254. The chain crosses the membrane as a helical span at residues 1255 to 1275; the sequence is HLWEWADALAMGLLIIKASAM. Topologically, residues 1276–1292 are cytoplasmic; that stretch reads EDRRGLGFLLAGLMTQR. The chain crosses the membrane as a helical span at residues 1293-1313; that stretch reads HLVAVHHGLMVFLTVALAVVG. At 1314–1327 the chain is on the lumenal side; the sequence is RNIYNGQKERKGLC. Residues 1328-1348 traverse the membrane as a helical segment; that stretch reads FTVPLASLLGGSGSGLRMLAL. At 1349–1359 the chain is on the cytoplasmic side; sequence WECLGGRGRRS. The helical transmembrane segment at 1360–1378 threads the bilayer; sequence LSEPLTVVGVMLAMASGLL. Topologically, residues 1379 to 1382 are lumenal; it reads RHSS. Residues 1383-1403 form a helical membrane-spanning segment; that stretch reads QEALLALSAGSFLILMLILGT. Over 1404–1452 the chain is Cytoplasmic; that stretch reads RRLQLTAEWAGVVEWNPELVNEGGEVSLKVRQDAMGNLHLTEVEREERR. Residues 1410 to 1449 are interacts with and activates NS3 protease; the sequence is AEWAGVVEWNPELVNEGGEVSLKVRQDAMGNLHLTEVERE. An intramembrane region (helical) is located at residues 1453–1473; it reads LALWLVFGLLASAYHWSGILV. Residues 1474–2163 lie on the Cytoplasmic side of the membrane; it reads TMGAWTVYEL…AERDAPEAML (690 aa). Residues 1490-1669 form the Peptidase S7 domain; the sequence is TDLVFSGQLP…NVEKSRPEMP (180 aa). Residues histidine 1543, aspartate 1567, and serine 1627 each act as charge relay system; for serine protease NS3 activity in the active site. Residues 1675-1832 form the Helicase ATP-binding domain; the sequence is GKWTSKGSIT…ESKGAIVSEE (158 aa). ATP is bound at residue 1688 to 1695; that stretch reads MHPGSGKT. A DEAH box motif is present at residues 1780–1783; it reads DEAH. One can recognise a Helicase C-terminal domain in the interval 1842–2001; it reads DGFDWITEFE…TVRGPVATFY (160 aa). Residue lysine 1884 is modified to N6-acetyllysine; by host. The helical transmembrane segment at 2164 to 2184 threads the bilayer; it reads TLLEVAVLGIATLGVVWCFIV. Topologically, residues 2185–2190 are lumenal; the sequence is RTSVSR. An intramembrane region (helical) is located at residues 2191–2210; sequence MVLGTLVLAVALILLWLGGM. A topological domain (lumenal) is located at residue aspartate 2211. Residues 2212–2232 form a helical membrane-spanning segment; the sequence is YGTMAGVALIFYLLLTVLQPE. Residues 2233–2243 lie on the Cytoplasmic side of the membrane; that stretch reads PGKQRSGEDNR. A helical transmembrane segment spans residues 2244–2264; it reads LAFLLIGLGSVVGLVAANELG. The Lumenal segment spans residues 2265-2300; the sequence is YLEQTKTDISGLFRREDQGGMVWDAWTNIDIQPARS. The segment at residues 2301–2321 is an intramembrane region (helical); sequence WGTYVLIVSLFTPYMLHQLQT. The Lumenal portion of the chain corresponds to 2322 to 2344; sequence KIQRLVNSSVAAGTQAMRDLGGG. Positions 2345–2365 form an intramembrane region, helical; it reads TPFFGVAGHVVALGVTSLVGA. The Lumenal segment spans residues 2366–2369; the sequence is TPTS. The helical transmembrane segment at 2370-2390 threads the bilayer; the sequence is LALGVALAALHLAVVTSGLEA. Over 2391 to 2433 the chain is Cytoplasmic; it reads ELTQRAHRAFFSAMVKNPMVDGEIINPIPDGDPKPALYERKMS. Residues 2434 to 2454 form a helical membrane-spanning segment; that stretch reads LFLAIGLCIAAVALNRTAAAM. The Lumenal portion of the chain corresponds to 2455–2479; it reads TEAGAVAVAALGQLLRPEEESWWTM. The chain crosses the membrane as a helical span at residues 2480 to 2500; sequence PMACGMAGLVRGSLWGLLPVL. At 2501-3415 the chain is on the cytoplasmic side; sequence HRIWLRTQGA…WELKLESSII (915 aa). An mRNA cap 0-1 NS5-type MT domain is found at 2513 to 2777; that stretch reads GGAEGSTLGD…EIDLGTGTRC (265 aa). Serine 2568 is an S-adenosyl-L-methionine binding site. Serine 2568 bears the Phosphoserine mark. Lysine 2573 (for 2'-O-MTase activity) is an active-site residue. Glycine 2598, tryptophan 2599, threonine 2616, isoleucine 2617, aspartate 2643, and valine 2644 together coordinate S-adenosyl-L-methionine. Aspartate 2658 acts as the For 2'-O-MTase activity in catalysis. Isoleucine 2659 contacts S-adenosyl-L-methionine. Active-site for 2'-O-MTase activity residues include lysine 2695 and glutamate 2731. The segment at 2731–2735 is interaction with host SCRIB; sequence EMYYS. Residue tyrosine 2733 coordinates S-adenosyl-L-methionine. Zn(2+) contacts are provided by glutamate 2951, histidine 2955, cysteine 2960, and cysteine 2963. The 150-residue stretch at 3041–3190 folds into the RdRp catalytic domain; that stretch reads GKLYADDTAG…KPIDDRFGKA (150 aa). The Zn(2+) site is built by histidine 3225, cysteine 3241, and cysteine 3360.

This sequence in the N-terminal section; belongs to the class I-like SAM-binding methyltransferase superfamily. mRNA cap 0-1 NS5-type methyltransferase family. In terms of assembly, homodimer. Interacts (via N-terminus) with host EXOC1 (via C-terminus); this interaction results in EXOC1 degradation through the proteasome degradation pathway. Forms heterodimers with envelope protein E in the endoplasmic reticulum and Golgi. As to quaternary structure, homodimer; in the endoplasmic reticulum and Golgi. In terms of assembly, forms homodimers as well as homohexamers. NS1 may interact with NS4A. Forms a heterodimer with serine protease NS3. May form homooligomers. As to quaternary structure, forms a heterodimer with NS2B. Interacts with NS4B. Interacts with unphosphorylated RNA-directed RNA polymerase NS5; this interaction stimulates RNA-directed RNA polymerase NS5 guanylyltransferase activity. In terms of assembly, interacts with serine protease NS3. Interacts with host STAT2; this interaction inhibits the phosphorylation of the latter, and, when all viral proteins are present (polyprotein), targets STAT2 for degradation. In terms of processing, specific enzymatic cleavages in vivo yield mature proteins. Cleavages in the lumen of endoplasmic reticulum are performed by host signal peptidase, whereas cleavages in the cytoplasmic side are performed by serine protease NS3. Signal cleavage at the 2K-4B site requires a prior NS3 protease-mediated cleavage at the 4A-2K site. Post-translationally, cleaved in post-Golgi vesicles by a host furin, releasing the mature small envelope protein M, and peptide pr. This cleavage is incomplete as up to 30% of viral particles still carry uncleaved prM. N-glycosylated. In terms of processing, N-glycosylated. The excreted form is glycosylated and this is required for efficient secretion of the protein from infected cells. Post-translationally, acetylated by host KAT5. Acetylation modulates NS3 RNA-binding and unwinding activities and plays an important positive role for viral replication. Phosphorylated on serines residues. This phosphorylation may trigger NS5 nuclear localization.

Its subcellular location is the virion. It localises to the host nucleus. The protein resides in the host cytoplasm. The protein localises to the host perinuclear region. It is found in the secreted. Its subcellular location is the virion membrane. It localises to the host endoplasmic reticulum membrane. It carries out the reaction Selective hydrolysis of -Xaa-Xaa-|-Yaa- bonds in which each of the Xaa can be either Arg or Lys and Yaa can be either Ser or Ala.. The catalysed reaction is RNA(n) + a ribonucleoside 5'-triphosphate = RNA(n+1) + diphosphate. It catalyses the reaction a ribonucleoside 5'-triphosphate + H2O = a ribonucleoside 5'-diphosphate + phosphate + H(+). The enzyme catalyses ATP + H2O = ADP + phosphate + H(+). It carries out the reaction a 5'-end (5'-triphosphoguanosine)-ribonucleoside in mRNA + S-adenosyl-L-methionine = a 5'-end (N(7)-methyl 5'-triphosphoguanosine)-ribonucleoside in mRNA + S-adenosyl-L-homocysteine. The catalysed reaction is a 5'-end (N(7)-methyl 5'-triphosphoguanosine)-ribonucleoside in mRNA + S-adenosyl-L-methionine = a 5'-end (N(7)-methyl 5'-triphosphoguanosine)-(2'-O-methyl-ribonucleoside) in mRNA + S-adenosyl-L-homocysteine + H(+). Plays a role in virus budding by binding to the cell membrane and gathering the viral RNA into a nucleocapsid that forms the core of a mature virus particle. During virus entry, may induce genome penetration into the host cytoplasm after hemifusion induced by the surface proteins. Can migrate to the cell nucleus where it modulates host functions. Its function is as follows. Inhibits RNA silencing by interfering with host Dicer. Functionally, prevents premature fusion activity of envelope proteins in trans-Golgi by binding to envelope protein E at pH6.0. After virion release in extracellular space, gets dissociated from E dimers. In terms of biological role, acts as a chaperone for envelope protein E during intracellular virion assembly by masking and inactivating envelope protein E fusion peptide. prM is the only viral peptide matured by host furin in the trans-Golgi network probably to avoid catastrophic activation of the viral fusion activity in acidic Golgi compartment prior to virion release. prM-E cleavage is inefficient, and many virions are only partially matured. These uncleaved prM would play a role in immune evasion. May play a role in virus budding. Exerts cytotoxic effects by activating a mitochondrial apoptotic pathway through M ectodomain. May display a viroporin activity. Its function is as follows. Binds to host cell surface receptor and mediates fusion between viral and cellular membranes. Envelope protein is synthesized in the endoplasmic reticulum in the form of heterodimer with protein prM. They play a role in virion budding in the ER, and the newly formed immature particle is covered with 60 spikes composed of heterodimer between precursor prM and envelope protein E. The virion is transported to the Golgi apparatus where the low pH causes dissociation of PrM-E heterodimers and formation of E homodimers. prM-E cleavage is inefficient, and many virions are only partially matured. These uncleaved prM would play a role in immune evasion. Functionally, involved in immune evasion, pathogenesis and viral replication. Once cleaved off the polyprotein, is targeted to three destinations: the viral replication cycle, the plasma membrane and the extracellular compartment. Essential for viral replication. Required for formation of the replication complex and recruitment of other non-structural proteins to the ER-derived membrane structures. Excreted as a hexameric lipoparticle that plays a role against host immune response. Antagonizing the complement function. Binds to the host macrophages and dendritic cells. Inhibits signal transduction originating from Toll-like receptor 3 (TLR3). In terms of biological role, component of the viral RNA replication complex that functions in virion assembly and antagonizes the host immune response. Required cofactor for the serine protease function of NS3. May have membrane-destabilizing activity and form viroporins. Its function is as follows. Displays three enzymatic activities: serine protease, NTPase and RNA helicase. NS3 serine protease, in association with NS2B, performs its autocleavage and cleaves the polyprotein at dibasic sites in the cytoplasm: C-prM, NS2A-NS2B, NS2B-NS3, NS3-NS4A, NS4A-2K and NS4B-NS5. NS3 RNA helicase binds RNA and unwinds dsRNA in the 3' to 5' direction. Functionally, regulates the ATPase activity of the NS3 helicase activity. NS4A allows NS3 helicase to conserve energy during unwinding. In terms of biological role, functions as a signal peptide for NS4B and is required for the interferon antagonism activity of the latter. Induces the formation of ER-derived membrane vesicles where the viral replication takes place. Inhibits interferon (IFN)-induced host STAT1 phosphorylation and nuclear translocation, thereby preventing the establishment of cellular antiviral state by blocking the IFN-alpha/beta pathway. Inhibits STAT2 translocation in the nucleus after IFN-alpha treatment. Its function is as follows. Replicates the viral (+) and (-) RNA genome, and performs the capping of genomes in the cytoplasm. NS5 methylates viral RNA cap at guanine N-7 and ribose 2'-O positions. Besides its role in RNA genome replication, also prevents the establishment of cellular antiviral state by blocking the interferon-alpha/beta (IFN-alpha/beta) signaling pathway. Inhibits host TYK2 and STAT2 phosphorylation, thereby preventing activation of JAK-STAT signaling pathway. This chain is Genome polyprotein, found in Tick-borne powassan virus (strain LB) (POWV).